Consider the following 230-residue polypeptide: MPDGGLIIAIDGPSGTGKSTTSRALATRLNAKYLDTGAMYRVATLHVLNQGIDPADTDAVITATAALPLAISDDPSSTEVLLAGVDVQTEIRGPEVTSHVSAVSAIPEVRDNLVNLQRALADRAHRCVVEGRDIGTVVLVDAPVKAYLTASPEVRAQRRYDQDTAAGRAADFDEVLAAVVKRDELDSTRAASPLKPAEDAHIIDTSAMTMDEVLTHLIQLTEASAERSNQ.

12 to 20 contributes to the ATP binding site; the sequence is GPSGTGKST.

The protein belongs to the cytidylate kinase family. Type 1 subfamily.

Its subcellular location is the cytoplasm. It carries out the reaction CMP + ATP = CDP + ADP. The enzyme catalyses dCMP + ATP = dCDP + ADP. The protein is Cytidylate kinase of Corynebacterium efficiens (strain DSM 44549 / YS-314 / AJ 12310 / JCM 11189 / NBRC 100395).